Reading from the N-terminus, the 239-residue chain is Large ribosomal subunit protein bL25 (239 aa).

Positions 217–239 (IKAEAHAAEGTQAEGSTEEGQQQ) are disordered. Positions 229–239 (AEGSTEEGQQQ) are enriched in polar residues.

The protein belongs to the bacterial ribosomal protein bL25 family. CTC subfamily. Part of the 50S ribosomal subunit; part of the 5S rRNA/L5/L18/L25 subcomplex. Contacts the 5S rRNA. Binds to the 5S rRNA independently of L5 and L18.

This is one of the proteins that binds to the 5S RNA in the ribosome where it forms part of the central protuberance. In Deinococcus deserti (strain DSM 17065 / CIP 109153 / LMG 22923 / VCD115), this protein is Large ribosomal subunit protein bL25.